Consider the following 390-residue polypeptide: Ribosomal RNA large subunit methyltransferase G (390 aa).

This sequence belongs to the methyltransferase superfamily. RlmG family.

It localises to the cytoplasm. It carries out the reaction guanosine(1835) in 23S rRNA + S-adenosyl-L-methionine = N(2)-methylguanosine(1835) in 23S rRNA + S-adenosyl-L-homocysteine + H(+). In terms of biological role, specifically methylates the guanine in position 1835 (m2G1835) of 23S rRNA. This Alcanivorax borkumensis (strain ATCC 700651 / DSM 11573 / NCIMB 13689 / SK2) protein is Ribosomal RNA large subunit methyltransferase G.